Here is a 359-residue protein sequence, read N- to C-terminus: Nicotinate-nucleotide--dimethylbenzimidazole phosphoribosyltransferase (359 aa).

Glu318 functions as the Proton acceptor in the catalytic mechanism.

Belongs to the CobT family. As to quaternary structure, homodimer.

It catalyses the reaction 5,6-dimethylbenzimidazole + nicotinate beta-D-ribonucleotide = alpha-ribazole 5'-phosphate + nicotinate + H(+). It participates in nucleoside biosynthesis; alpha-ribazole biosynthesis; alpha-ribazole from 5,6-dimethylbenzimidazole: step 1/2. Catalyzes the synthesis of alpha-ribazole-5'-phosphate from nicotinate mononucleotide (NAMN) and 5,6-dimethylbenzimidazole (DMB). This Shigella sonnei (strain Ss046) protein is Nicotinate-nucleotide--dimethylbenzimidazole phosphoribosyltransferase.